Reading from the N-terminus, the 393-residue chain is MAKESYKREKPHVNIGTIGHVDHGKTTLTAAITKVLSEKGQAQKMDFDEIDKAPEEKERGITISTSHVEYETPSRHYAHIDCPGHADYVKNMITGAAQMDGAILVVAATDGPMPQTREHILLAKQVNVPSIVVFMNKVDIADPELIELVEMELRELLSSYGFPGDDIPIIQGSALGALNGEAEWVGKIEELMEAVDNYIPTPVRDVDKPFLMPVEDVFSISGRGTVGTGRIERGVIKINEEVELVGIRPTKKSVVTGIEMFRKLLDQGEAGDNAGLLLRGVNKDELERGMVIAKPGSITPHTKFKAEVYILKKEEGGRHTPFFNGYRPQFYFRTTDVTGSVNLPDGVEMVMPGDNLSIEAELIAPIAMDEGLRFAIREGGRTVGAGTVTSIIE.

The tr-type G domain occupies 10-203 (KPHVNIGTIG…AVDNYIPTPV (194 aa)). The tract at residues 19–26 (GHVDHGKT) is G1. 19-26 (GHVDHGKT) is a binding site for GTP. Thr26 provides a ligand contact to Mg(2+). The segment at 60 to 64 (GITIS) is G2. Positions 81–84 (DCPG) are G3. GTP is bound by residues 81-85 (DCPGH) and 136-139 (NKVD). The G4 stretch occupies residues 136 to 139 (NKVD). A G5 region spans residues 173 to 175 (SAL).

Belongs to the TRAFAC class translation factor GTPase superfamily. Classic translation factor GTPase family. EF-Tu/EF-1A subfamily. In terms of assembly, monomer.

The protein localises to the cytoplasm. The enzyme catalyses GTP + H2O = GDP + phosphate + H(+). GTP hydrolase that promotes the GTP-dependent binding of aminoacyl-tRNA to the A-site of ribosomes during protein biosynthesis. The sequence is that of Elongation factor Tu from Chloroherpeton thalassium (strain ATCC 35110 / GB-78).